Here is a 294-residue protein sequence, read N- to C-terminus: Cytidine deaminase (294 aa).

2 CMP/dCMP-type deaminase domains span residues 48–168 (DDDA…FGPR) and 186–294 (LKGD…VTLA). 89–91 (NME) contacts substrate. His102 is a binding site for Zn(2+). Glu104 acts as the Proton donor in catalysis. Zn(2+) is bound by residues Cys129 and Cys132.

It belongs to the cytidine and deoxycytidylate deaminase family. In terms of assembly, homodimer. It depends on Zn(2+) as a cofactor.

It carries out the reaction cytidine + H2O + H(+) = uridine + NH4(+). The catalysed reaction is 2'-deoxycytidine + H2O + H(+) = 2'-deoxyuridine + NH4(+). Its function is as follows. This enzyme scavenges exogenous and endogenous cytidine and 2'-deoxycytidine for UMP synthesis. This chain is Cytidine deaminase, found in Cronobacter sakazakii (strain ATCC BAA-894) (Enterobacter sakazakii).